Consider the following 5162-residue polypeptide: MSRKKVDNIYPLTPMQEGMLFHSLLDEGSESYFEQMRFTIKGLIDPAILEQSLNALIERHDILRTVFLLEKVQKPRQIVLRERKTKVQVLDITHLSEGEQAAYLEDFAQKDRQASFDLAKDVLIRLTLVRTSADTHTLFWSHHHILLDGWCIPIVLNDFFQIYQQRKGGLPVELGPVYPYSTYISWLGEQDAEEAKASWAEYISGYEPTSFIHKQGGKNSYRQAELVFAIEQGLTDSLNKLAKQLHVTLNNLFRAIWGLMLQRQCNTEDVVFGSVVSGRPSHLPNVEQMVGLFINTVPIRVQAGAEQTFSELVKQVQQEALSLAKYHYLSLADIQGNQQLIDHILLFQNYPMGQQFLTRLNQYNEEFTLTHLSAFEQTNYDLNVMVTPSDVITIKYIYNAAVFSEEQLLHISRQLTTIMTQVTNAPDILLQKLEVVDPAEKQLQLHSFNDTYRHYPTDKLIHQIFEERAEREPERIALVMGEQVLTYRELNEKANQLAKLLRARGIGPESMVSLLTERSAEMMIAILAIFKAGGAYLPIDPSHPKERIEYILQDSRSELLLVNHRFLGAVDFADRIIDLEAAEIYQGAADNLECVSHANHLAYVIYTSGSTGKPKGVMIEHASLLNIIFALQELYPLLENDAYLLKTTYTFDVSVAEIFGWILGSGRLVILDPGAEKEPAHIWETMVNHGVTHVNFVPSMLIPFVDYVRDQQQESPLRYIFAAGEAMPSELVGKVYEALPGVILENIYGPTESTIYATKYSLAKDSQDVLVPIGKPLANIQTHIVNKHGQLQPVGVPGELCIAGASLARGYWNNEALTNEKFVPHPFAAGQRMYRTGDLARYRQDGNIEYLGRIDHQVKIRGYRIELDEIRAQLIQEASIRDAVVIARTDHNGQAYLCAYFIADKQWTVNALREALRQTLPDYMVPSHFIQMEEFPLTSSGKIDRKALPLPDGRVHTGNVYLAPRNPVEELVVRIWEEVLNVSQVGVHDNFFELGGHSLLATQVLSRTAKLFHVRLPMREIFTHQTVAELARRIQALRHGAEADKHSPIQPSALQRADELPLSYAQQRLWFLDRLIPDSAMYNIPVGFRLRGTVDELVLERALNEIIQRHESLRTTFVDVDGRALQVIHTDVHLSLGVTDLRDKPAAAKDAEWKQMAEEDAATPFRLDQWPLLRAMLIRLEEQESVLWLNVHHIISDGWSMDVLVNELSEVYETLLKGEALPLAALPIQYRDYAVWQREKSQDDVWKEQLRYWKNKLDGSEPLLPLPTDRPRAVVQSYRGDHLSFYVPGEVGQKLRELGRQEGATLFMTLLAAFKSFLYRYTHANDILIGTPVAGRNRQEIENLIGFFVNMLVLRTDLSDDPTFVELLRRVRETAFDAFANEDVPFEKLVDELQIERSLSYSPLFQVLFAVQGMSTGVREGETLAIAPDEVTLNQTTKFDLTLTMIEAADNGLKGVFEYSTDLFDRTTIERMAEHFGNLLQAIAADPGQKIVELPLLGGAEQSRMLVEWNQTDVAYSLDLLVHERVARIAQELPEQFAVIGEQGALTYAQLDAKANQLAHALLKRGIGSEDLVGICVERSSEMQIGQLAILKAGAAYVPMDPAYPRERLAFMIKDAGMSLVLTQERLLDALPQEAAALLCLDRDWQEIAAESTAAPAIKTNADQLAYVIYTSGSTGTPKGVEIEHGSLLNLVNWHQRAYSVSAEDRASQIAGTAFDASVWETWPYLTAGATICQPREEIRLSPEKLRDWLVETGITISFLPTPLAENLLPLPWPTGAALRYMLTGGDTLHQYPTADVPFTLVNQYGPTENTVVATAGAVPVLGERESAPTIGRPIDNVSVYVLDENRQPVPVGVVGELYIGGKSLARGYRNRPDLTEASFVPNPFSPIEGARMYRTGDLVRYAADGSIEFIGRADDQVSIRGFRVELGEIESALYAHPAVAESVVIVREDVTPGVKRLVAYAVLHEGEERQTSELRQSLKEMLPDYMVPSAIVLMEALPLTPNGKVDRRALPLPDVAQTEWEGSFVEPQSDVERKLAEIWQEVLGVETIGVHDNFFELGGDSILTIQIVSRANQAGLQLTPKHLFDAQTLAELAASAVVLEKAPEMQAEQGIVTGELPLTPIQTWFFEQDVRHVHHWNQSVMLAVREELDMTALTQAFAALPRQHDALRLRFQQVNGTWQAAHGEIADEDVLLVADLSSVPEAEREARMRHITDELQASLDIEKGPLHRAAYFQLGAEQRLFIVIHHLVVDGVSWRIILEDLQTAYEQVKAGQKIAWPQKTTSFKSWAEELTTYAEQSAVDEYWTGMDSEQACGLPVDHPQGKNTEGLAVQVKAKLSADETRALLQEVPAAYRTQINDVLLSALTRTITDWTNKRALYVSVEGHGREPIVDGVDVSRTVGWFTSLYPVLLETEPDLAWGDLLKSIKEQVRAIPDKGIGYGIHRYLSRDGQTAEMLRAKPQPEISFNYLGQFGQGQTTDAALFQIIPNWSASNVSEDETRLYKLDVMSMVAQDQLEMSWTFSRDLYEPGTIEKLAHDYVQALRAIIAHCRTEQAGGYTPSDFPLAELDQNSLDKFIGHNRLIENVYTLTPLQEGMLFHSLYEQAGGDYVVQLALKLEHVNVEAFSAAWQKVVERHAILRTSFLWSGLEKPHQVVHAKVKTFVERLDWRHLTAAEQEAGLQTYLEQDRKRGFDLARPPLMRWTLIRLDASTFQFVWSFHHMLLDGWSTPIVFQDWQAFYAAASHGKEASLPAIPPFSAYIAWLKRQNLEEAQQYWRDYLQGFGVPTPLGMGKSGGSAGQPKEYADHKLLLSERATANLLAFARKHQLTLNTVVQGAWALILARYAGEAEVVFGTTNLGRPTDLPDAEAMVGLFINTLPVRVLFPEQTTVIDWLQSLQQAQSEMRQYEFTPLVDIQSWSEVPRGQSLFDSIFVFENYLSGTSVDSESGMLLGEVKAVEQTSYPLTLVVAPGEELMLKLIYETGRFEQPAMDKVLAQLSSVLEAIMREPHEQLADLSIITEAERHKLLVEWNATDMPYERNLVMHQLFEAQVEATPDAQALVVGTERLTYAELNKRANQLAHYLRAQGVGPEVLVAVLMERTTEMIVALLGIIKAGGAYVPIDPAYPQDRIGYTLDDSQAAIVLTQERLLPMLPEHTAQVICLDRDWACMAVQPEANVPNLAAPTNLSYVIYTSGSTGLPKGVAIQHSSVIAFIFWAKTVFSAEEMSGVLASTSICFDLSVYEIFVTLSCGGKVILADNALHLPSLPAAKEVTLINTVPSAAKELVRMNAIPPSVRVVNLAGEPLPNTLAQSLYALGHVQKVFNLYGPSEDTTYSTYVQVTKGAKTEPTIGRPLANTQAYVLDAKLQPVPLGLPGELYLGGDGLARGYLKRPKMTAERFLPNPFHPDPDARMYSTGDLVRYLPDGQLEYLGRIDHQVKIRGYRIELGELEAVLRSHPQIKEAVVVAKEDKLGEKRLVAYITTKDGECGDRAVLTSWAKAKLPEFMVPSFFVWLDAMPLTPNGKIDRKQLPEPEWGQVASAAGYVAPRNQTEVLVASIWADVLGIEQVGVHDNFFELGGHSLLATRVASRLRETFAKEVPIRAIFERPTVAELSETLGAIGQNETEAQMLPVSREAHLPLSFAQQRLWFLDRLMPDSTLYNIPSAVRLLGDLDIAAWEKSLQVLIQRHESLRTTFGDVDGEAVQVIHSRLDGKLNVIDLRGMPADEREAEAHRLAGLEAATPFDLSQGPLLRTTLIRLAEQECVFLFNLHHIIFDGWSIGIFLKEMRALYEAFVREEAPELAEITVQYADYAVWQRKWLEGEVLAEQLAYWKEKLSGAEPLLALPTDQPRPAVQTHDGAMHTIKLSGELYAKLNKLSQEEGATLFMTLLAAFQVLLYRYSGQEDILVGSPVAGRNRQETEPLIGFFINTLVLRTDLSGEPTFRELLARVRETAFEAYAHQDLPFEKLVDELELERSLSYSPLFQVMFVLQNFQLNLDEKAGIRVADFEMDKHLVTSKYDLTLTMAEKQNGLFATFEYNTALFHEATMERLSQHFIQLLEAIVHMPDQGIARLPLLNQSERAQLLVEWNDTTTAYPRNKRVDQLFRETALLYPERLAVVAGNQTLTYAELERRANQTANYLQQKGVRPGALVGLCVKRSLEMLIGMLGILKAGGAYVPLDPDYPEERLAYMMGDAGITVLLTQEQLMPGLPSGERTTIALDRDWPLIAKESEQAPDVDTTAESLAYVIYTSGSTGLPKGTLVVHRGIVRLVKETDYVTITEQDVFLQASTVSFDAATFEIWGSLLNGAKLVLLPPELPSLAEIGQAIQSHHVTTLWLTAGLFTLMVDHHKEYLSGVRQLLVGGDIVSVPHVKKALEIAGLTVINGYGPTENTTFTCCNPVTVMPESAHTFPIGRPIKNTTAYVLDRHMQPVPIGVTGELYIGGDGLAEGYLNRPDLTAERFVPNPFATDQAARLYRTGDLVRYLPDGLIEFIGRLDNQVKIRGFRIELSEVEAVLAKHPAITASVVIVHENEAGMKQLVAYAVKDAEQELGTAELRQHFKAHVPDYMVPAAFVMLDALPLTPNGKVDRKALPAPVLERSREEDAFAAATSHVEQTLADIWCAVLRMDRIGIHDNFFELGGDSILSIQIVARANKAGIHLTPKQLFDQQTIAELAKVAGQSTKVDAEQGNVTGEVPLLPIQTWFFEQKQPTPHHWNQSMLLQVNEPLEEECLSQAVAQLLAHHDALRLRYTFADGQWKQTYADVDSEVPLQVEDLSMSPPAQQARKIEKLAQQAQASLDLQNGPLLKVVYFDLGYDRPGRLLMVIHHLAVDGVSWRILIEDLQTAYGQAEKGNKIQLPPKTTSYKAWAEKLHKYASSERMLVDQDYWLKAADELSGHPLPVHDWAENTEANGRMWTIHLEEEETDALLQKVPSRYRVQINDILLTALALAYGKWTGESALLVNLEGHGREELFEDVDLSRTVGWFTSMYPLLIQLEPNTSSEDALARVKEKLQQIPHKGLGYGLLRYMAQDPELVEKLKAIPQAPLSFNYLGQFHQAADAKALLAYAEGERGANSGPDNRRTHLIDVVGAVTEGKLGLSFLYNGRLYSESHIETFARHYTDALQSLIQAEKQSYRAEDFEDADLSQSALNKVLARLKNRKGNELHGGSH.

4 Carrier domains span residues 963-1038 (APRN…QALR), 2027-2101 (EPQS…VVLE), 3541-3616 (APRN…GAIG), and 4601-4675 (AATS…GQST). O-(pantetheine 4'-phosphoryl)serine is present on residues S998, S2062, S3576, and S4636.

Belongs to the ATP-dependent AMP-binding enzyme family. Large multienzyme complex composed of 4 subunits; LgrA, LgrB, LgrC and LgrD. The cofactor is pantetheine 4'-phosphate.

Its function is as follows. Activates the 3rd to 6th amino acids (Ala, D-Leu, Ala and D-Val) in linear gramicidin and catalyzes the formation of the peptide bond between them. This enzyme is also responsible for the epimerization of the 4th (D-Leu) and the 6th (D-Val) amino acids. This is Linear gramicidin synthase subunit B (lgrB) from Brevibacillus parabrevis.